The sequence spans 757 residues: 5-methyltetrahydropteroyltriglutamate--homocysteine methyltransferase (757 aa).

Residues 15 to 18 (RELK) and Lys-114 each bind 5-methyltetrahydropteroyltri-L-glutamate. L-homocysteine-binding positions include 428-430 (IGS) and Glu-481. L-methionine contacts are provided by residues 428-430 (IGS) and Glu-481. 5-methyltetrahydropteroyltri-L-glutamate contacts are provided by residues 512–513 (RC) and Trp-558. Residue Asp-596 coordinates L-homocysteine. Residue Asp-596 coordinates L-methionine. Glu-602 lines the 5-methyltetrahydropteroyltri-L-glutamate pocket. His-639, Cys-641, and Glu-663 together coordinate Zn(2+). Catalysis depends on His-692, which acts as the Proton donor. Cys-724 serves as a coordination point for Zn(2+).

This sequence belongs to the vitamin-B12 independent methionine synthase family. The cofactor is Zn(2+).

It catalyses the reaction 5-methyltetrahydropteroyltri-L-glutamate + L-homocysteine = tetrahydropteroyltri-L-glutamate + L-methionine. It functions in the pathway amino-acid biosynthesis; L-methionine biosynthesis via de novo pathway; L-methionine from L-homocysteine (MetE route): step 1/1. In terms of biological role, catalyzes the transfer of a methyl group from 5-methyltetrahydrofolate to homocysteine resulting in methionine formation. This chain is 5-methyltetrahydropteroyltriglutamate--homocysteine methyltransferase, found in Lactococcus lactis subsp. cremoris (strain SK11).